The primary structure comprises 472 residues: Spliceosome-associated protein CWC27 homolog (472 aa).

N-acetylserine is present on Ser-2. The PPIase cyclophilin-type domain occupies 11 to 166; the sequence is TNGKVLLKTT…NPHKIKSCEV (156 aa). Asn-109 and Asn-201 each carry an N-linked (GlcNAc...) asparagine glycan. Residues 206 to 230 adopt a coiled-coil conformation; the sequence is SFGEEAEEEEEEVNRVSQSMKGKSK. Disordered regions lie at residues 206-386 and 398-472; these read SFGE…DQTL and QAIA…KERR. Basic and acidic residues predominate over residues 231-241; sequence SSHDLLKDDPH. Residues 257–268 show a composition bias toward acidic residues; that stretch reads DLVDDGEDESAE. 3 stretches are compositionally biased toward basic and acidic residues: residues 269 to 286, 304 to 347, and 359 to 371; these read HDEY…ERIA, EVEK…KRSE, and EYRR…EALR. Positions 306-377 form a coiled coil; sequence EKKSVSRSEE…EALRKQQSKK (72 aa). Ser-346 is modified (phosphoserine). The span at 404–418 shows a compositional bias: acidic residues; that stretch reads PENDIPETEVEDDEG. Basic and acidic residues-rich tracts occupy residues 425–437 and 457–472; these read QFED…KDAS and RREE…KERR.

Belongs to the cyclophilin-type PPIase family. Part of the activated spliceosome B/catalytic step 1 spliceosome, one of the forms of the spliceosome which has a well-formed active site but still cannot catalyze the branching reaction and is composed at least of 52 proteins, the U2, U5 and U6 snRNAs and the pre-mRNA. Recruited during early steps of activated spliceosome B maturation, it is probably one of the first proteins released from this complex as he matures to the spliceosome C complex. Component of the minor spliceosome, which splices U12-type introns.

The protein resides in the nucleus. In terms of biological role, as part of the spliceosome, plays a role in pre-mRNA splicing. Probable inactive PPIase with no peptidyl-prolyl cis-trans isomerase activity. As a component of the minor spliceosome, involved in the splicing of U12-type introns in pre-mRNAs. The protein is Spliceosome-associated protein CWC27 homolog of Homo sapiens (Human).